Consider the following 483-residue polypeptide: Cobyric acid synthase (483 aa).

A GATase cobBQ-type domain is found at 252–439 (KLKVVVPVLT…LHGFLDSEAV (188 aa)). C333 serves as the catalytic Nucleophile. The active site involves H431.

It belongs to the CobB/CobQ family. CobQ subfamily.

The protein operates within cofactor biosynthesis; adenosylcobalamin biosynthesis. Functionally, catalyzes amidations at positions B, D, E, and G on adenosylcobyrinic A,C-diamide. NH(2) groups are provided by glutamine, and one molecule of ATP is hydrogenolyzed for each amidation. The chain is Cobyric acid synthase from Vibrio vulnificus (strain CMCP6).